The chain runs to 101 residues: uncharacterized protein (101 aa).

This is an uncharacterized protein from Acanthamoeba polyphaga mimivirus (APMV).